The chain runs to 530 residues: Cytochrome P450 2U1 (530 aa).

The next 4 helical transmembrane spans lie at 21–41, 99–119, 247–267, and 328–348; these read LQAV…DWVW, VYGN…LSDF, ICLH…YLPF, and LFYI…NSLL. Heme is bound at residue Cys-476. A helical membrane pass occupies residues 481 to 501; that stretch reads LAKMELFLMFVSLMQSFTFAL.

Belongs to the cytochrome P450 family. It depends on heme as a cofactor. Specifically expressed in thymus and brain. In brain, expressed in cortex, cerebellum, olfactory bulbs, pons and medulla and the limbic structures (at protein level).

The protein resides in the endoplasmic reticulum membrane. It localises to the microsome membrane. Its subcellular location is the mitochondrion inner membrane. The catalysed reaction is an omega-methyl-long-chain fatty acid + reduced [NADPH--hemoprotein reductase] + O2 = an omega-hydroxy-long-chain fatty acid + oxidized [NADPH--hemoprotein reductase] + H2O + H(+). The enzyme catalyses (5Z,8Z,11Z,14Z)-eicosatetraenoate + reduced [NADPH--hemoprotein reductase] + O2 = 19-hydroxy-(5Z,8Z,11Z,14Z)-eicosatetraenoate + oxidized [NADPH--hemoprotein reductase] + H2O + H(+). It carries out the reaction (5Z,8Z,11Z,14Z)-eicosatetraenoate + reduced [NADPH--hemoprotein reductase] + O2 = 20-hydroxy-(5Z,8Z,11Z,14Z)-eicosatetraenoate + oxidized [NADPH--hemoprotein reductase] + H2O + H(+). It catalyses the reaction N-[(5Z,8Z,11Z,14Z)-eicosatetraenoyl]-serotonin + reduced [NADPH--hemoprotein reductase] + O2 = 2-oxo-N-[(5Z,8Z,11Z,14Z)-eicosatetraenoyl]-serotonin + oxidized [NADPH--hemoprotein reductase] + H2O + H(+). In terms of biological role, a cytochrome P450 monooxygenase involved in the metabolism of arachidonic acid and its conjugates. Mechanistically, uses molecular oxygen inserting one oxygen atom into a substrate, and reducing the second into a water molecule, with two electrons provided by NADPH via cytochrome P450 reductase (CPR; NADPH-ferrihemoprotein reductase). Acts as an omega and omega-1 hydroxylase for arachidonic acid and possibly for other long chain fatty acids. May modulate the arachidonic acid signaling pathway and play a role in other fatty acid signaling processes. May down-regulate the biological activities of N-arachidonoyl-serotonin, an endocannabinoid that has anti-nociceptive effects through inhibition of fatty acid amide hydrolase FAAH, TRPV1 receptor and T-type calcium channels. Catalyzes C-2 oxidation of the indole ring of N-arachidonoyl-serotonin forming a less active product 2-oxo-N-arachidonoyl-serotonin. The chain is Cytochrome P450 2U1 (Cyp2u1) from Rattus norvegicus (Rat).